The following is a 286-amino-acid chain: Prepilin leader peptidase/N-methyltransferase (286 aa).

Residues 11–31 traverse the membrane as a helical segment; the sequence is LGIFFVGLFSLMVGSFLNVVI. Zn(2+) contacts are provided by cysteine 74, cysteine 77, cysteine 99, and cysteine 102. Transmembrane regions (helical) follow at residues 106-126, 132-152, 161-181, 185-205, 231-251, and 257-277; these read ISAR…IVAF, LSLG…FIDA, LTLP…FINL, VIGA…FKLI, LPII…GIGL, and MPFG…GAQI.

It belongs to the peptidase A24 family. It depends on Zn(2+) as a cofactor.

It is found in the cell inner membrane. The catalysed reaction is Typically cleaves a -Gly-|-Phe- bond to release an N-terminal, basic peptide of 5-8 residues from type IV prepilin, and then N-methylates the new N-terminal amino group, the methyl donor being S-adenosyl-L-methionine.. Functionally, plays an essential role in type IV pili and type II pseudopili formation by proteolytically removing the leader sequence from substrate proteins and subsequently monomethylating the alpha-amino group of the newly exposed N-terminal phenylalanine. The sequence is that of Prepilin leader peptidase/N-methyltransferase (fimP) from Dichelobacter nodosus (Bacteroides nodosus).